A 264-amino-acid chain; its full sequence is MIIPETDSFFFQEQPQHQPLYPDEALSPSLFGFDHYDHFYESFLPSQEIFLPSPKTRVFNESQELDSFHTPKHQKLIDSSFHFNSHDPFSPSPESNYLLDSYITEASNISKFQAPDFSSTFKVGWTEQGDTKKRELSAQSIAARKRRRRITEKTQELGKLIPGSQKHNTAEMFNAAAKYVKFLQAQIEILQLKQTKMQTLDSSKVGREMQFLLGSQEIQEKLSTEEVCVVPREMVQVLKAEECILTNPKISRDINKLLSTNLMN.

A bHLH domain is found at R134–L183.

Homodimer. Expressed constitutively in roots, leaves, stems, and flowers.

The protein resides in the nucleus. In Arabidopsis thaliana (Mouse-ear cress), this protein is Transcription factor bHLH52 (BHLH52).